A 319-amino-acid polypeptide reads, in one-letter code: ATP-dependent 6-phosphofructokinase (319 aa).

Gly-11 serves as a coordination point for ATP. 21–25 (RAVVR) is a binding site for ADP. Residues 72 to 73 (RC) and 102 to 105 (GDGS) contribute to the ATP site. Asp-103 is a binding site for Mg(2+). 125-127 (TID) lines the substrate pocket. Asp-127 serves as the catalytic Proton acceptor. Arg-154 is an ADP binding site. Substrate contacts are provided by residues Arg-162 and 169-171 (MGR). Residues 185–187 (GAE), Arg-211, and 213–215 (KKH) each bind ADP. Substrate contacts are provided by residues Glu-222, Arg-243, and 249–252 (HVQR).

It belongs to the phosphofructokinase type A (PFKA) family. ATP-dependent PFK group I subfamily. Prokaryotic clade 'B1' sub-subfamily. As to quaternary structure, homotetramer. It depends on Mg(2+) as a cofactor.

The protein resides in the cytoplasm. The enzyme catalyses beta-D-fructose 6-phosphate + ATP = beta-D-fructose 1,6-bisphosphate + ADP + H(+). Its pathway is carbohydrate degradation; glycolysis; D-glyceraldehyde 3-phosphate and glycerone phosphate from D-glucose: step 3/4. With respect to regulation, allosterically activated by ADP and other diphosphonucleosides, and allosterically inhibited by phosphoenolpyruvate. Its function is as follows. Catalyzes the phosphorylation of D-fructose 6-phosphate to fructose 1,6-bisphosphate by ATP, the first committing step of glycolysis. This Bacillus anthracis (strain A0248) protein is ATP-dependent 6-phosphofructokinase.